Reading from the N-terminus, the 255-residue chain is Putative esterase YitV (255 aa).

The sequence is that of Putative esterase YitV (yitV) from Bacillus subtilis (strain 168).